The sequence spans 315 residues: beta-hydroxyaspartate dehydratase (315 aa).

Position 53 is an N6-(pyridoxal phosphate)lysine (lysine 53). Pyridoxal 5'-phosphate contacts are provided by residues asparagine 80, 179–183 (GGGGM), and threonine 303.

It depends on pyridoxal 5'-phosphate as a cofactor.

The catalysed reaction is (3S)-3-hydroxy-D-aspartate = iminosuccinate + H2O. Its function is as follows. Catalyzes the dehydration of (2R,3S)-beta-hydroxyaspartate ((3S)-3-hydroxy-D-aspartate) into iminosuccinate. Is essential for the growth of P.denitrificans in the presence of glycolate and glyoxylate since it functions in glyoxylate assimilation via the beta-hydroxyaspartate cycle (BHAC). The sequence is that of beta-hydroxyaspartate dehydratase from Paracoccus denitrificans (strain Pd 1222).